Here is a 441-residue protein sequence, read N- to C-terminus: MSNVTHQPKIGFVSLGCPKNLVDSERILTELRTEGYDVVPRYDDADMVIVNTCGFIDSAVQESLEAIGEALNENGKVIVTGCLGAKEDQIREVHPKVLEITGPHSYEQVLQHVHHYVPKPKHNPFLSLVPEQGVKLTPRHYAYLKISEGCNHRCTFCIIPSMRGDLVSRPIGDVLSEAKRLVDAGVKEILVISQDTSAYGVDVKHRTGFHNGEPVKTSMVSLCEQLSKLGVWTRLHYVYPYPHVDDVIPLMAEGKILPYLDIPLQHASPRILKLMKRPGSVDRQLARIKQWREICPELTLRSTFIVGFPGETEEDFQMLLDFLKEARLDRVGCFKYSPVEGAGANELPDQVPEEVKEERWNRFMQLQQQISAERLQEKVGREILVIVDEVDEEGAIGRSMADAPEIDGAVYLNGETNVKPGDIVRVKVENADEYDLWGSRV.

One can recognise an MTTase N-terminal domain in the interval 8-118 (PKIGFVSLGC…VLQHVHHYVP (111 aa)). Positions 17, 53, 82, 150, 154, and 157 each coordinate [4Fe-4S] cluster. The region spanning 136 to 373 (LTPRHYAYLK…MQLQQQISAE (238 aa)) is the Radical SAM core domain. A TRAM domain is found at 376-441 (QEKVGREILV…DEYDLWGSRV (66 aa)).

The protein belongs to the methylthiotransferase family. RimO subfamily. Requires [4Fe-4S] cluster as cofactor.

It localises to the cytoplasm. The catalysed reaction is L-aspartate(89)-[ribosomal protein uS12]-hydrogen + (sulfur carrier)-SH + AH2 + 2 S-adenosyl-L-methionine = 3-methylsulfanyl-L-aspartate(89)-[ribosomal protein uS12]-hydrogen + (sulfur carrier)-H + 5'-deoxyadenosine + L-methionine + A + S-adenosyl-L-homocysteine + 2 H(+). Functionally, catalyzes the methylthiolation of an aspartic acid residue of ribosomal protein uS12. The polypeptide is Ribosomal protein uS12 methylthiotransferase RimO (Salmonella agona (strain SL483)).